The sequence spans 378 residues: MAGDFYEILGVSRDCGKDELKRAYRRLARQYHPDVNKDPGAEEKFKEINRAYEVLSEPETRARYDRFGEAGVSGAGAAGADYGDMGGFADIFETIFSGFGGMGTGATGGGRRRSGPMRGDDLRLDLKLDFKEAIFGGEKEIRIPHLETCKTCSGSGAKAGTSANTCGTCNGTGQVRRATRTPFGSFAQVSVCPTCNGEGQVIAEKCESCGGAGRKQETKKLKITIPAGVDSGTRLRVSREGDAGVKGGPPGDLYVYLAVNADKEFRRDGTNILSEIEISYLQAILGDTVKVKTVDGTEDLTIPAGLQPNKVLILEGKGVPKLGNPVSRGDHLITVKVMIPTKVSREEKELLHQLAKLKGTEHSKGGFEGLLGNLFHNK.

Residues 4 to 68 (DFYEILGVSR…ETRARYDRFG (65 aa)) enclose the J domain. The segment at 136-218 (GGEKEIRIPH…CGGAGRKQET (83 aa)) adopts a CR-type zinc-finger fold. Residues Cys-149, Cys-152, Cys-166, Cys-169, Cys-192, Cys-195, Cys-206, and Cys-209 each coordinate Zn(2+). CXXCXGXG motif repeat units lie at residues 149–156 (CKTCSGSG), 166–173 (CGTCNGTG), 192–199 (CPTCNGEG), and 206–213 (CESCGGAG).

Belongs to the DnaJ family. Homodimer. Zn(2+) is required as a cofactor.

The protein resides in the cytoplasm. In terms of biological role, participates actively in the response to hyperosmotic and heat shock by preventing the aggregation of stress-denatured proteins and by disaggregating proteins, also in an autonomous, DnaK-independent fashion. Unfolded proteins bind initially to DnaJ; upon interaction with the DnaJ-bound protein, DnaK hydrolyzes its bound ATP, resulting in the formation of a stable complex. GrpE releases ADP from DnaK; ATP binding to DnaK triggers the release of the substrate protein, thus completing the reaction cycle. Several rounds of ATP-dependent interactions between DnaJ, DnaK and GrpE are required for fully efficient folding. Also involved, together with DnaK and GrpE, in the DNA replication of plasmids through activation of initiation proteins. In Picosynechococcus sp. (strain ATCC 27264 / PCC 7002 / PR-6) (Agmenellum quadruplicatum), this protein is Chaperone protein DnaJ.